A 286-amino-acid polypeptide reads, in one-letter code: Carbohydrate-binding domain-containing protein Cthe_2159 (286 aa).

The signal sequence occupies residues 1–20 (MSIKKLILAASILTTLALTG). A lipid anchor (N-palmitoyl cysteine) is attached at Cys21. Cys21 carries the S-diacylglycerol cysteine lipid modification. The tract at residues 124–225 (GKDNVLTDAE…GIKVENTEEP (102 aa)) is polygalacturonic acid-binding. Ca(2+)-binding residues include Arg152, Asp153, Asp154, Asn177, Asp178, Asp215, Asp243, Asp244, and Asp247.

Monomer.

Its subcellular location is the cell membrane. Functionally, binds cellulosic and pectic substrates. Displays no enzyme activity (in vitro). The chain is Carbohydrate-binding domain-containing protein Cthe_2159 from Acetivibrio thermocellus (strain ATCC 27405 / DSM 1237 / JCM 9322 / NBRC 103400 / NCIMB 10682 / NRRL B-4536 / VPI 7372) (Clostridium thermocellum).